Here is a 297-residue protein sequence, read N- to C-terminus: Nucleotide-binding protein Bsph_0448 (297 aa).

19 to 26 (GMSGAGKT) contributes to the ATP binding site. 70–73 (DMRG) lines the GTP pocket.

The protein belongs to the RapZ-like family.

Functionally, displays ATPase and GTPase activities. The protein is Nucleotide-binding protein Bsph_0448 of Lysinibacillus sphaericus (strain C3-41).